The sequence spans 471 residues: Ribulose bisphosphate carboxylase large chain (471 aa).

Substrate-binding residues include Asn115 and Thr165. Lys167 (proton acceptor) is an active-site residue. Lys169 contributes to the substrate binding site. Positions 193, 195, and 196 each coordinate Mg(2+). Lys193 is subject to N6-carboxylysine. The active-site Proton acceptor is His286. Positions 287, 319, and 371 each coordinate substrate.

It belongs to the RuBisCO large chain family. Type I subfamily. In terms of assembly, heterohexadecamer of 8 large chains and 8 small chains. Mg(2+) serves as cofactor.

The protein localises to the carboxysome. It carries out the reaction 2 (2R)-3-phosphoglycerate + 2 H(+) = D-ribulose 1,5-bisphosphate + CO2 + H2O. It catalyses the reaction D-ribulose 1,5-bisphosphate + O2 = 2-phosphoglycolate + (2R)-3-phosphoglycerate + 2 H(+). RuBisCO catalyzes two reactions: the carboxylation of D-ribulose 1,5-bisphosphate, the primary event in carbon dioxide fixation, as well as the oxidative fragmentation of the pentose substrate in the photorespiration process. Both reactions occur simultaneously and in competition at the same active site. This chain is Ribulose bisphosphate carboxylase large chain, found in Synechococcus sp. (strain RCC307).